The sequence spans 118 residues: MAGVMKLACMVLACMIVAGPITANALMSCGTVNGNLAGCIAYLTRGAPLTQGCCNGVTNLKNMASTTPDRQQACRCLQSAAKAVGPGLNTARAAGLPSACKVNIPYKISASTNCNTVR.

Residues 1-25 form the signal peptide; the sequence is MAGVMKLACMVLACMIVAGPITANA. 4 disulfide bridges follow: Cys-29/Cys-76, Cys-39/Cys-53, Cys-54/Cys-100, and Cys-74/Cys-114.

The protein belongs to the plant LTP family.

Its function is as follows. Plant non-specific lipid-transfer proteins transfer phospholipids as well as galactolipids across membranes. May play a role in wax or cutin deposition in the cell walls of expanding epidermal cells and certain secretory tissues. This chain is Non-specific lipid-transfer protein 2 (LTP2), found in Arabidopsis thaliana (Mouse-ear cress).